We begin with the raw amino-acid sequence, 199 residues long: NAD(P)H dehydrogenase (quinone) (199 aa).

The region spanning Val4–Ile190 is the Flavodoxin-like domain. FMN-binding positions include Ser10–Ile15 and Thr78–Phe80. Tyr12 serves as a coordination point for NAD(+). Residue Trp98 coordinates substrate. Residues Ser113 to Gly119 and His134 contribute to the FMN site.

Belongs to the WrbA family. The cofactor is FMN.

It catalyses the reaction a quinone + NADH + H(+) = a quinol + NAD(+). It carries out the reaction a quinone + NADPH + H(+) = a quinol + NADP(+). The sequence is that of NAD(P)H dehydrogenase (quinone) from Bradyrhizobium sp. (strain BTAi1 / ATCC BAA-1182).